An 82-amino-acid polypeptide reads, in one-letter code: Small ribosomal subunit protein bS16 (82 aa).

The protein belongs to the bacterial ribosomal protein bS16 family.

This is Small ribosomal subunit protein bS16 from Clostridium botulinum (strain Okra / Type B1).